Reading from the N-terminus, the 620-residue chain is UPF0313 protein BT_0254 (620 aa).

A Radical SAM core domain is found at 311–591 (AYDMIKFSVN…AQRQFFFWYK (281 aa)). 3 residues coordinate [4Fe-4S] cluster: cysteine 325, cysteine 329, and cysteine 332.

It belongs to the UPF0313 family. Requires [4Fe-4S] cluster as cofactor.

This is UPF0313 protein BT_0254 from Bacteroides thetaiotaomicron (strain ATCC 29148 / DSM 2079 / JCM 5827 / CCUG 10774 / NCTC 10582 / VPI-5482 / E50).